Here is a 62-residue protein sequence, read N- to C-terminus: Large ribosomal subunit protein bL28 (62 aa).

The protein belongs to the bacterial ribosomal protein bL28 family.

The polypeptide is Large ribosomal subunit protein bL28 (Streptococcus uberis (strain ATCC BAA-854 / 0140J)).